We begin with the raw amino-acid sequence, 310 residues long: Methionyl-tRNA formyltransferase (310 aa).

111-114 (SILP) contacts (6S)-5,6,7,8-tetrahydrofolate.

Belongs to the Fmt family.

The catalysed reaction is L-methionyl-tRNA(fMet) + (6R)-10-formyltetrahydrofolate = N-formyl-L-methionyl-tRNA(fMet) + (6S)-5,6,7,8-tetrahydrofolate + H(+). Its function is as follows. Attaches a formyl group to the free amino group of methionyl-tRNA(fMet). The formyl group appears to play a dual role in the initiator identity of N-formylmethionyl-tRNA by promoting its recognition by IF2 and preventing the misappropriation of this tRNA by the elongation apparatus. This is Methionyl-tRNA formyltransferase from Methylobacterium sp. (strain 4-46).